The sequence spans 104 residues: MVIRFDQIGSLVLSMKSLASLSFQRCLRENSSLVAALDRLDAAVDELSALSFDALTTPERDRARRDRDHHPWSRSRSQLSPRMAHGAVHQCQWPKAVWAVIDNP.

Basic and acidic residues predominate over residues 58-71 (PERDRARRDRDHHP). Residues 58–84 (PERDRARRDRDHHPWSRSRSQLSPRMA) are disordered.

This is an uncharacterized protein from Mycobacterium tuberculosis (strain ATCC 25618 / H37Rv).